The following is a 57-amino-acid chain: Large ribosomal subunit protein eL37 (57 aa).

4 residues coordinate Zn(2+): Cys-20, Cys-23, Cys-35, and Cys-38. Residues 20 to 38 (CRRCGEKSYHKQKKVCASC) form a C4-type zinc finger.

It belongs to the eukaryotic ribosomal protein eL37 family. Zn(2+) serves as cofactor.

Functionally, binds to the 23S rRNA. The polypeptide is Large ribosomal subunit protein eL37 (Natronomonas pharaonis (strain ATCC 35678 / DSM 2160 / CIP 103997 / JCM 8858 / NBRC 14720 / NCIMB 2260 / Gabara) (Halobacterium pharaonis)).